A 227-amino-acid chain; its full sequence is Cytochrome c oxidase subunit 2 (227 aa).

Residues 1-14 are Mitochondrial intermembrane-facing; the sequence is MAYPFQLGLQDATS. The chain crosses the membrane as a helical span at residues 15–45; the sequence is PIMEELLHFHDHTLMIVFLISSLVLYIISSM. Over 46–59 the chain is Mitochondrial matrix; the sequence is LTTKLTHTSTMDAQ. A helical membrane pass occupies residues 60-87; it reads EVETVWTILPAIILVLIALPSLRILYMM. Residues 88 to 227 are Mitochondrial intermembrane-facing; sequence DEINNPSLTV…YFETWSALML (140 aa). Cu cation-binding residues include H161, C196, E198, C200, H204, and M207. E198 is a binding site for Mg(2+). Y218 is modified (phosphotyrosine).

Belongs to the cytochrome c oxidase subunit 2 family. In terms of assembly, component of the cytochrome c oxidase (complex IV, CIV), a multisubunit enzyme composed of 14 subunits. The complex is composed of a catalytic core of 3 subunits MT-CO1, MT-CO2 and MT-CO3, encoded in the mitochondrial DNA, and 11 supernumerary subunits COX4I, COX5A, COX5B, COX6A, COX6B, COX6C, COX7A, COX7B, COX7C, COX8 and NDUFA4, which are encoded in the nuclear genome. The complex exists as a monomer or a dimer and forms supercomplexes (SCs) in the inner mitochondrial membrane with NADH-ubiquinone oxidoreductase (complex I, CI) and ubiquinol-cytochrome c oxidoreductase (cytochrome b-c1 complex, complex III, CIII), resulting in different assemblies (supercomplex SCI(1)III(2)IV(1) and megacomplex MCI(2)III(2)IV(2)). Found in a complex with TMEM177, COA6, COX18, COX20, SCO1 and SCO2. Interacts with TMEM177 in a COX20-dependent manner. Interacts with COX20. Interacts with COX16. Cu cation is required as a cofactor.

The protein resides in the mitochondrion inner membrane. It catalyses the reaction 4 Fe(II)-[cytochrome c] + O2 + 8 H(+)(in) = 4 Fe(III)-[cytochrome c] + 2 H2O + 4 H(+)(out). Functionally, component of the cytochrome c oxidase, the last enzyme in the mitochondrial electron transport chain which drives oxidative phosphorylation. The respiratory chain contains 3 multisubunit complexes succinate dehydrogenase (complex II, CII), ubiquinol-cytochrome c oxidoreductase (cytochrome b-c1 complex, complex III, CIII) and cytochrome c oxidase (complex IV, CIV), that cooperate to transfer electrons derived from NADH and succinate to molecular oxygen, creating an electrochemical gradient over the inner membrane that drives transmembrane transport and the ATP synthase. Cytochrome c oxidase is the component of the respiratory chain that catalyzes the reduction of oxygen to water. Electrons originating from reduced cytochrome c in the intermembrane space (IMS) are transferred via the dinuclear copper A center (CU(A)) of subunit 2 and heme A of subunit 1 to the active site in subunit 1, a binuclear center (BNC) formed by heme A3 and copper B (CU(B)). The BNC reduces molecular oxygen to 2 water molecules using 4 electrons from cytochrome c in the IMS and 4 protons from the mitochondrial matrix. The polypeptide is Cytochrome c oxidase subunit 2 (MT-CO2) (Speothos venaticus (Bush dog)).